A 337-amino-acid chain; its full sequence is Glucose transporter 2C (337 aa).

The segment at 1–22 is disordered; that stretch reads MTERRDNVSHAPDAIEGPNDGA. The Cytoplasmic portion of the chain corresponds to 1–43; that stretch reads MTERRDNVSHAPDAIEGPNDGAHAEDTSPGFFSLENLGVAQVQ. A helical membrane pass occupies residues 44-64; sequence VVGGTLNGFSIGFVAVYILLY. The Extracellular segment spans residues 65 to 119; sequence EVATNCSLFKTTEACKAVGSYGCEWKDTEVCSWKKECDSDSDGVNPCESLIGYSS. Asparagine 69 carries N-linked (GlcNAc...) asparagine glycosylation. Residues 120–140 form a helical membrane-spanning segment; that stretch reads LYSGIFASAMIVGSMVGSIIA. Topologically, residues 141 to 152 are cytoplasmic; the sequence is GKCITMFGLKKS. A helical membrane pass occupies residues 153 to 173; it reads FIIVGVMSVVASALNHISVAT. The Extracellular portion of the chain corresponds to 174-175; sequence NE. A helical transmembrane segment spans residues 176-196; that stretch reads FWVLCAGRVLMGIGLGVVCVI. The Cytoplasmic portion of the chain corresponds to 197–214; it reads CPMYVNENAHPKLSKVDG. A helical membrane pass occupies residues 215–235; the sequence is VLFQVFITFGIMLAAMLGLIL. Over 236 to 250 the chain is Extracellular; that stretch reads DKTVNYDNDPDMAGR. The helical transmembrane segment at 251-271 threads the bilayer; it reads FHGFCAVSSVLSVAMFLVGMF. Over 272–300 the chain is Cytoplasmic; that stretch reads LRESTATFSQDDDGKADGGMDPNEYGWGQ. The chain crosses the membrane as a helical span at residues 301-321; the sequence is MLWPLFMGAVTAGTLQLTGIN. The Extracellular portion of the chain corresponds to 322–337; the sequence is AVMNYAPKITENLGMD.

It belongs to the major facilitator superfamily. Sugar transporter (TC 2.A.1.1) family.

It is found in the membrane. Facilitative glucose transporter. This is Glucose transporter 2C (THT2C) from Trypanosoma brucei brucei.